An 844-amino-acid polypeptide reads, in one-letter code: Translation initiation factor IF-2 (844 aa).

The span at 1-11 (MTEDVKADAPK) shows a compositional bias: basic and acidic residues. Disordered stretches follow at residues 1–48 (MTED…VKTD) and 79–249 (RLEA…GTAL). Positions 21–30 (TTVSSTTTGG) are enriched in low complexity. A compositionally biased stretch (basic and acidic residues) spans 79–161 (RLEAEKAATK…AAEEAKRYAE (83 aa)). A compositionally biased stretch (acidic residues) spans 162 to 175 (ADDSDNESSSEDYS). Positions 200 to 210 (RGKNKVAKAKK) are enriched in basic residues. A compositionally biased stretch (basic and acidic residues) spans 211–237 (GGRDDENSKNSKNERESNRKNQKDAKF). The region spanning 343 to 513 (TRAPVVTIMG…LLQSEVLELT (171 aa)) is the tr-type G domain. Residues 352-359 (GHVDHGKT) are G1. 352–359 (GHVDHGKT) contacts GTP. Residues 377-381 (GITQH) are G2. The segment at 399–402 (DTPG) is G3. GTP contacts are provided by residues 399 to 403 (DTPGH) and 453 to 456 (NKID). A G4 region spans residues 453 to 456 (NKID). The interval 489 to 491 (SAK) is G5.

This sequence belongs to the TRAFAC class translation factor GTPase superfamily. Classic translation factor GTPase family. IF-2 subfamily.

The protein localises to the cytoplasm. Functionally, one of the essential components for the initiation of protein synthesis. Protects formylmethionyl-tRNA from spontaneous hydrolysis and promotes its binding to the 30S ribosomal subunits. Also involved in the hydrolysis of GTP during the formation of the 70S ribosomal complex. The sequence is that of Translation initiation factor IF-2 from Haemophilus influenzae (strain 86-028NP).